Consider the following 289-residue polypeptide: ATP synthase gamma chain (289 aa).

This sequence belongs to the ATPase gamma chain family. In terms of assembly, F-type ATPases have 2 components, CF(1) - the catalytic core - and CF(0) - the membrane proton channel. CF(1) has five subunits: alpha(3), beta(3), gamma(1), delta(1), epsilon(1). CF(0) has three main subunits: a, b and c.

It localises to the cell inner membrane. Its function is as follows. Produces ATP from ADP in the presence of a proton gradient across the membrane. The gamma chain is believed to be important in regulating ATPase activity and the flow of protons through the CF(0) complex. The polypeptide is ATP synthase gamma chain (Anaeromyxobacter dehalogenans (strain 2CP-C)).